Consider the following 469-residue polypeptide: COP9 signalosome complex subunit 5 (469 aa).

An MPN domain is found at 63 to 200; that stretch reads TYISSLALCK…IGAFRTFPDN (138 aa). Residues His146, His148, and Asp159 each coordinate Zn(2+). The JAMM motif signature appears at 146-159; sequence HSHPGYGCWLSGID. Disordered stretches follow at residues 201–220 and 331–404; these read YKSP…PPSK and YDSF…KRPM. Residues 344-353 are compositionally biased toward acidic residues; that stretch reads DEMDDESDLD.

This sequence belongs to the peptidase M67A family. CSN5 subfamily. In terms of assembly, component of the COP9 signalosome (CSN) complex.

It localises to the cytoplasm. The protein localises to the nucleus. Functionally, catalytic Component of the COP9 signalosome (CSN) complex that acts as an regulator of the ubiquitin (Ubl) conjugation pathway by mediating the deneddylation of the cullin subunit of SCF-type E3 ubiquitin-protein ligase complexes. The CSN complex is involved in the regulation of the mating pheromone response. The sequence is that of COP9 signalosome complex subunit 5 (RRI1) from Debaryomyces hansenii (strain ATCC 36239 / CBS 767 / BCRC 21394 / JCM 1990 / NBRC 0083 / IGC 2968) (Yeast).